Consider the following 282-residue polypeptide: V-set domain-containing T-cell activation inhibitor 1 (282 aa).

The signal sequence occupies residues 1 to 24 (MASLGQIIFWSIINVIIILAGAIV). 2 consecutive Ig-like V-type domains span residues 35–144 (HFIT…ANLE) and 153–241 (PEIN…IKVT). 2 disulfide bridges follow: C56-C130 and C168-C225. N216 is a glycosylation site (N-linked (GlcNAc...) asparagine). A lipid anchor (GPI-anchor amidated glycine) is attached at G257. A propeptide spans 258–282 (PSPCVSSVSAAGWALLSLSCCLMLR) (removed in mature form).

The protein belongs to the immunoglobulin superfamily. BTN/MOG family. Post-translationally, N-glycosylated.

It localises to the cell membrane. Negatively regulates T-cell-mediated immune response by inhibiting T-cell activation, proliferation, cytokine production and development of cytotoxicity. When expressed on the cell surface of tumor macrophages, plays an important role, together with regulatory T-cells (Treg), in the suppression of tumor-associated antigen-specific T-cell immunity. Involved in promoting epithelial cell transformation. This is V-set domain-containing T-cell activation inhibitor 1 from Rattus norvegicus (Rat).